A 584-amino-acid chain; its full sequence is Endoribonuclease YBEY, chloroplastic (584 aa).

The transit peptide at 1-50 directs the protein to the chloroplast; sequence MLSRVCPTLRYNRIWSAHAREMPRATLLLLQPNFFHSSPKTALVNRLDVT. Positions 240, 244, and 250 each coordinate Zn(2+).

Belongs to the endoribonuclease YbeY family. Zn(2+) is required as a cofactor.

The protein localises to the plastid. Its subcellular location is the chloroplast stroma. Functionally, endoribonuclease required for chloroplast ribosomal RNA (rRNA) processing and essential for normal growth and development. May be involved in maturation of both the 5' and 3' ends of 16S, 23S, and 4.5S rRNAs. Cleaves chloroplast rRNAs, mRNAs and tRNAs in vitro. This is Endoribonuclease YBEY, chloroplastic from Arabidopsis thaliana (Mouse-ear cress).